The following is a 153-amino-acid chain: Agglutinin (153 aa).

Beta-D-galactosyl-(1-&gt;3)-N-acetyl-D-galactosamine is bound by residues 22-25 and Asn-46; that span reads NAWE. Positions 58–153 constitute a Ricin B-type lectin domain; it reads GDSAEYLIIN…DNQKWYFDAK (96 aa).

As to quaternary structure, homodimer.

Functionally, lectin that primarily recognizes glycans with a non-reducing terminal N-acetylgalactosamine (GalNAc), with a preference for the alpha- over the beta-anomer. Can also bind non-reducing terminal galactose (Gal) residues but with a lower affinity. Strongly interacts with glycolipid type glycans with terminal non-reducing Gal or GalNAc but fails to bind sialylated or fucosylated forms of the same glycans. Strongly interacts with galactosylated N-glycans, displaying highest affinity for alpha-1-3 branched mono-antennary N-glycans but also binding to multi-antennary glycans. The chain is Agglutinin from Sclerotinia sclerotiorum (strain ATCC 18683 / 1980 / Ss-1) (White mold).